We begin with the raw amino-acid sequence, 362 residues long: Phosphoserine aminotransferase (362 aa).

Residue R42 participates in L-glutamate binding. Pyridoxal 5'-phosphate contacts are provided by residues 76–77, W102, T152, D172, and Q195; that span reads AR. K196 carries the post-translational modification N6-(pyridoxal phosphate)lysine. 237–238 contributes to the pyridoxal 5'-phosphate binding site; it reads NT.

The protein belongs to the class-V pyridoxal-phosphate-dependent aminotransferase family. SerC subfamily. Homodimer. Pyridoxal 5'-phosphate serves as cofactor.

It localises to the cytoplasm. The enzyme catalyses O-phospho-L-serine + 2-oxoglutarate = 3-phosphooxypyruvate + L-glutamate. It carries out the reaction 4-(phosphooxy)-L-threonine + 2-oxoglutarate = (R)-3-hydroxy-2-oxo-4-phosphooxybutanoate + L-glutamate. The protein operates within amino-acid biosynthesis; L-serine biosynthesis; L-serine from 3-phospho-D-glycerate: step 2/3. It participates in cofactor biosynthesis; pyridoxine 5'-phosphate biosynthesis; pyridoxine 5'-phosphate from D-erythrose 4-phosphate: step 3/5. Catalyzes the reversible conversion of 3-phosphohydroxypyruvate to phosphoserine and of 3-hydroxy-2-oxo-4-phosphonooxybutanoate to phosphohydroxythreonine. In Haemophilus influenzae (strain ATCC 51907 / DSM 11121 / KW20 / Rd), this protein is Phosphoserine aminotransferase.